Consider the following 356-residue polypeptide: CMP-sialic acid transporter 2 (356 aa).

Basic and acidic residues predominate over residues 1–24; that stretch reads MEYRRVKDQESYDVVSQKDIESPG. Residues 1–44 form a disordered region; it reads MEYRRVKDQESYDVVSQKDIESPGERSLSSTSATSSLSTAGASK. Residues 1 to 52 are Cytoplasmic-facing; the sequence is MEYRRVKDQESYDVVSQKDIESPGERSLSSTSATSSLSTAGASKGKNSWKLK. A compositionally biased stretch (low complexity) spans 27–44; sequence SLSSTSATSSLSTAGASK. The chain crosses the membrane as a helical span at residues 53-73; the sequence is SIVTLALTLLTSSQAILIVWS. Residues 74-82 lie on the Lumenal side of the membrane; sequence KRAGKYEYS. The helical transmembrane segment at 83–103 threads the bilayer; that stretch reads VTTANFSVEALKCLLSLIALY. The Cytoplasmic portion of the chain corresponds to 104–125; the sequence is RTWNSQGVTEDNRLSTSFDEVS. A helical membrane pass occupies residues 126–146; that stretch reads VYPIPAILYMVKNLLQYYIFA. Over 147–149 the chain is Lumenal; that stretch reads YVD. A helical transmembrane segment spans residues 150–172; the sequence is APAYQILKNLNIISTGVLYRIIL. Residues 173-175 lie on the Cytoplasmic side of the membrane; that stretch reads KKK. The chain crosses the membrane as a helical span at residues 176 to 196; it reads LSEIQWAAFILLCAGCTTAQL. Residues 197–211 are Lumenal-facing; that stretch reads NPSSDHVLQTPIQGW. The helical transmembrane segment at 212–232 threads the bilayer; sequence VMAIVMALLSGFAGVYTEAII. The Cytoplasmic portion of the chain corresponds to 233 to 239; the sequence is KKRPSRN. A helical membrane pass occupies residues 240 to 260; sequence INVQNFWLYIFGMLFNLVAIC. Residues 261 to 277 lie on the Lumenal side of the membrane; sequence VQDFDAVMNKGFFHGYS. A helical membrane pass occupies residues 278-298; that stretch reads FITVLMILNHALSGIAVSMVM. Over 299–314 the chain is Cytoplasmic; the sequence is KYADNIVKVYSTSVAM. Residues 315-335 form a helical membrane-spanning segment; that stretch reads LLTAVVSVFLFGFHLSLAFFL. Residues 336-356 are Lumenal-facing; that stretch reads GSTVVSVSVYLHSVGKPQPQK.

It belongs to the nucleotide-sugar transporter family. CMP-Sialate:CMP antiporter (TC 2.A.7.12) subfamily. Expressed in roots, leaves and stalks.

The protein localises to the golgi apparatus membrane. Sugar transporter involved in the transport of CMP-sialic acid from the cytoplasm into the Golgi. May transport important nucleotide sugars such as CMP-Kdo (2-keto-3-deoxy-D-manno-octulosonic acid) in physiological conditions. This chain is CMP-sialic acid transporter 2, found in Oryza sativa subsp. japonica (Rice).